Reading from the N-terminus, the 491-residue chain is UDP-N-acetylmuramate--L-alanine ligase (491 aa).

126–132 provides a ligand contact to ATP; sequence GTHGKTT.

The protein belongs to the MurCDEF family.

The protein localises to the cytoplasm. The enzyme catalyses UDP-N-acetyl-alpha-D-muramate + L-alanine + ATP = UDP-N-acetyl-alpha-D-muramoyl-L-alanine + ADP + phosphate + H(+). The protein operates within cell wall biogenesis; peptidoglycan biosynthesis. Its function is as follows. Cell wall formation. This chain is UDP-N-acetylmuramate--L-alanine ligase, found in Escherichia coli O1:K1 / APEC.